A 408-amino-acid chain; its full sequence is Putative polysaccharide ligase RBE_0399 (408 aa).

Transmembrane regions (helical) follow at residues 5 to 25, 72 to 92, 94 to 114, 130 to 150, 163 to 183, 192 to 212, 230 to 250, 325 to 345, 359 to 377, and 380 to 400; these read FFIFLVPSLGMVAGLSVAATV, MTIKTELLFAGWCLISCLFAI, PINSLINFVQVFTILFLGFVV, LIFGTLTGILLFFVEYFSYGF, MLDRGCALLSITAWVVIAILI, LILYILVLYLLSISDSLASFL, IFSKLIIFGLITGSLLFPIIA, ILQITLELGLIGLALFLSLVY, FRASSYACFINYYIIGMIS, and VWQIWWIASSIWVLILMKLLV.

Belongs to the O-antigen ligase family.

Its subcellular location is the membrane. This chain is Putative polysaccharide ligase RBE_0399 (rfaL), found in Rickettsia bellii (strain RML369-C).